The sequence spans 242 residues: MQRFVCSGVFRQTSVLLQISPVSHCHTRRMQDSPSHRSLKQLISSQRWLNSTTALCSPTSQKTSASGQEEPDPLHDKSSGLIQRFKKTFKQYGKVMIPVHLLTSTMWFGTFYYAAMKGVNLVPFLEYVGFPDKVVKLLENSQSGYALTAYAMYKIATPARYTVTLGGTSLSVKYLRKHGYMSTPPPVKEYLQEKMEETKERISGKMEETKDRFSERMEETKDKFNEKLQETKDKVSFRKKKE.

Positions 57–67 (SPTSQKTSASG) are enriched in polar residues. The interval 57 to 78 (SPTSQKTSASGQEEPDPLHDKS) is disordered. Residues 76–188 (DKSSGLIQRF…GYMSTPPPVK (113 aa)) form the DUF1279 domain. The helical transmembrane segment at 92-114 (YGKVMIPVHLLTSTMWFGTFYYA) threads the bilayer. Positions 188-237 (KEYLQEKMEETKERISGKMEETKDRFSERMEETKDKFNEKLQETKDKVSF) form a coiled coil. Residues 198-236 (TKERISGKMEETKDRFSERMEETKDKFNEKLQETKDKVS) show a composition bias toward basic and acidic residues. A disordered region spans residues 198–242 (TKERISGKMEETKDRFSERMEETKDKFNEKLQETKDKVSFRKKKE).

Its subcellular location is the membrane. This is an uncharacterized protein from Danio rerio (Zebrafish).